The chain runs to 114 residues: Large ribosomal subunit protein uL22 (114 aa).

Belongs to the universal ribosomal protein uL22 family. In terms of assembly, part of the 50S ribosomal subunit.

Functionally, this protein binds specifically to 23S rRNA; its binding is stimulated by other ribosomal proteins, e.g. L4, L17, and L20. It is important during the early stages of 50S assembly. It makes multiple contacts with different domains of the 23S rRNA in the assembled 50S subunit and ribosome. The globular domain of the protein is located near the polypeptide exit tunnel on the outside of the subunit, while an extended beta-hairpin is found that lines the wall of the exit tunnel in the center of the 70S ribosome. The polypeptide is Large ribosomal subunit protein uL22 (Streptococcus uberis (strain ATCC BAA-854 / 0140J)).